The primary structure comprises 548 residues: Synaptic vesicle 2-related protein (548 aa).

At 1-87 (MEEDLFQLRQ…GFGKFQWKLS (87 aa)) the chain is on the cytoplasmic side. 2 positions are modified to phosphoserine: Ser-25 and Ser-31. Residues 88–108 (VLTGLAWMADAMEMMILSILA) traverse the membrane as a helical segment. The Vesicular segment spans residues 109-122 (PQLHCEWRLPSWQV). A helical membrane pass occupies residues 123–143 (ALLTSVVFVGMMSSSTLWGNI). Residues 144–156 (SDQYGRKTGLKIS) lie on the Cytoplasmic side of the membrane. A helical membrane pass occupies residues 157–177 (VLWTLYYGILSAFAPVYSWIL). The Vesicular portion of the chain corresponds to 178 to 180 (VLR). Residues 181–201 (GLVGFGIGGVPQSVTLYAEFL) traverse the membrane as a helical segment. The Cytoplasmic segment spans residues 202 to 209 (PMKARAKC). The chain crosses the membrane as a helical span at residues 210 to 230 (ILLIEVFWAIGTVFEVVLAVF). The Vesicular segment spans residues 231–238 (VMPSLGWR). A helical transmembrane segment spans residues 239–259 (WLLILSAVPLLLFAVLCFWLP). Residues 260–316 (ESARYDVLSGNQEKAIATLKRIATENGAPMPLGKLIISRQEDRGKMRDLFTPHFRWT) lie on the Cytoplasmic side of the membrane. A helical transmembrane segment spans residues 317 to 337 (TLLLWFIWFSNAFSYYGLVLL). Residues 338 to 373 (TTELFQAGDVCGISSRKKAVEAKCSLACEYLSEEDY) are Vesicular-facing. A helical transmembrane segment spans residues 374 to 394 (MDLLWTTLSEFPGVLVTLWII). Residues 395–401 (DRLGRKK) are Cytoplasmic-facing. A helical membrane pass occupies residues 402 to 422 (TMALCFVIFSFCSLLLFICVG). Topologically, residues 423–424 (RN) are vesicular. The chain crosses the membrane as a helical span at residues 425 to 445 (VLTLLLFIARAFISGGFQAAY). Residues 446–457 (VYTPEVYPTATR) are Cytoplasmic-facing. The chain crosses the membrane as a helical span at residues 458 to 478 (ALGLGTCSGMARVGALITPFI). The Vesicular segment spans residues 479–489 (AQVMLESSVYL). Residues 490 to 510 (TLAVYSGCCLLAALASCFLPI) form a helical membrane-spanning segment. Residues 511–548 (ETKGRGLQESSHREWGQEMVGRGMHGADVTRSNSGSQE) are Cytoplasmic-facing. Ser-542 is modified (phosphoserine).

This sequence belongs to the major facilitator superfamily.

It is found in the cytoplasmic vesicle. Its subcellular location is the secretory vesicle. It localises to the synaptic vesicle membrane. The chain is Synaptic vesicle 2-related protein (SVOP) from Pongo abelii (Sumatran orangutan).